Consider the following 327-residue polypeptide: Solute-binding protein SPO1773 (327 aa).

The signal sequence occupies residues 1–26 (MTISFKGLARGVACAALVLAALPAAA). 3-hydroxybenzoate-binding positions include 39-41 (HTW), Arg150, 170-172 (RIT), and Asp211.

It belongs to the bacterial solute-binding protein 7 family. As to quaternary structure, the complex is comprised of an extracytoplasmic solute-binding protein and a heteromeric permease formed by two transmembrane proteins.

It localises to the periplasm. Its function is as follows. Solute-binding protein that binds 3,4-dihydroxybenzoate and 3-hydroxybenzoate (in vitro). Probably part of a tripartite ATP-independent periplasmic (TRAP) transport system that mediates solute transport into the cytoplasm. The sequence is that of Solute-binding protein SPO1773 from Ruegeria pomeroyi (strain ATCC 700808 / DSM 15171 / DSS-3) (Silicibacter pomeroyi).